Consider the following 290-residue polypeptide: ATP synthase gamma chain (290 aa).

The protein belongs to the ATPase gamma chain family. In terms of assembly, F-type ATPases have 2 components, CF(1) - the catalytic core - and CF(0) - the membrane proton channel. CF(1) has five subunits: alpha(3), beta(3), gamma(1), delta(1), epsilon(1). CF(0) has four main subunits: a, b, b' and c.

The protein resides in the cellular chromatophore membrane. Its function is as follows. Produces ATP from ADP in the presence of a proton gradient across the membrane. The gamma chain is believed to be important in regulating ATPase activity and the flow of protons through the CF(0) complex. In Rhodobacter capsulatus (Rhodopseudomonas capsulata), this protein is ATP synthase gamma chain.